Reading from the N-terminus, the 2190-residue chain is Highly-reducing polyketide synthase 1 (2190 aa).

Residues L6–A431 enclose the Ketosynthase family 3 (KS3) domain. Catalysis depends on for beta-ketoacyl synthase activity residues C179, H315, and H355. The region spanning F541–A857 is the Malonyl-CoA:ACP transacylase (MAT) domain. The N-terminal hotdog fold stretch occupies residues N925–A1061. A PKS/mFAS DH domain is found at N925–S1246. The Proton acceptor; for dehydratase activity role is filled by H957. Residues T1089–S1246 form a C-terminal hotdog fold region. The active-site Proton donor; for dehydratase activity is the D1154. The region spanning G1494–I1804 is the Enoyl reductase (ER) domain. Residues A1828–S2005 form the Ketoreductase (KR) domain. One can recognise a Carrier domain in the interval K2107–S2184. S2144 is modified (O-(pantetheine 4'-phosphoryl)serine).

Requires pantetheine 4'-phosphate as cofactor.

Its function is as follows. Highly-reducing polyketide synthase; part of the gene cluster that mediates the biosynthesis of liamocins, glycolipids (also called heavy oils) composed of a single mannitol or arabitol headgroup linked to either three, four or even six 3,5-dihydroxydecanoic ester tail-groups. Within the pathway, PKS1 is responsible for biosynthesis of 3,5-dihydroxydecanoic acid from acetyl-CoA and malonyl-CoA. A phosphopantetheine transferase (PPTase) activates the HR-PKS. The esterase EST1 then catalyzes ester bond formation between 3,5-dihydroxydecanoic acid and mannitol (provided by the mannitol-1-phosphate 5-dehydrogenase and the NADP-dependent mannitol dehydrogenase) or arabinol (provided by the L-arabinitol 4-dehydrogenase). This is Highly-reducing polyketide synthase 1 from Aureobasidium melanogenum (Aureobasidium pullulans var. melanogenum).